Consider the following 125-residue polypeptide: Fluoride-specific ion channel FluC (125 aa).

4 helical membrane passes run 9-29 (LFCA…YGLL), 32-52 (AFPY…GLIM), 67-87 (IGLT…SYET), and 99-119 (AFTN…LGII). The Na(+) site is built by glycine 75 and threonine 78.

The protein belongs to the fluoride channel Fluc/FEX (TC 1.A.43) family.

It is found in the cell inner membrane. It carries out the reaction fluoride(in) = fluoride(out). Na(+) is not transported, but it plays an essential structural role and its presence is essential for fluoride channel function. Its function is as follows. Fluoride-specific ion channel. Important for reducing fluoride concentration in the cell, thus reducing its toxicity. This Trichlorobacter lovleyi (strain ATCC BAA-1151 / DSM 17278 / SZ) (Geobacter lovleyi) protein is Fluoride-specific ion channel FluC.